We begin with the raw amino-acid sequence, 244 residues long: DNA repair protein RecO (244 aa).

The protein belongs to the RecO family.

In terms of biological role, involved in DNA repair and RecF pathway recombination. The chain is DNA repair protein RecO from Jannaschia sp. (strain CCS1).